Consider the following 550-residue polypeptide: M-phase inducer phosphatase 1-B (550 aa).

Disordered stretches follow at residues 76 to 98 and 285 to 335; these read NLGDETAPLPTESPDRISSGKVE and SPSM…QRRG. Residues 290–310 show a composition bias toward basic and acidic residues; that stretch reads EKLDRPMLKRPVRPLDSETPV. Polar residues predominate over residues 322 to 335; it reads LQPQEENFQPQRRG. In terms of domain architecture, Rhodanese spans 401–508; sequence LVEKIFIIDC…FFPEYKELCE (108 aa). Cysteine 457 is a catalytic residue.

This sequence belongs to the MPI phosphatase family.

It catalyses the reaction O-phospho-L-tyrosyl-[protein] + H2O = L-tyrosyl-[protein] + phosphate. Tyrosine protein phosphatase which functions as a dosage-dependent inducer of mitotic progression. Directly dephosphorylates CDK1 and stimulates its kinase activity. This chain is M-phase inducer phosphatase 1-B (cdc25-1-b), found in Xenopus laevis (African clawed frog).